We begin with the raw amino-acid sequence, 356 residues long: D-alanine--D-alanine ligase (356 aa).

The 206-residue stretch at 134 to 339 folds into the ATP-grasp domain; sequence KQLFAHRGLP…YADLITKLIE (206 aa). 167–222 contacts ATP; it reads KDKLEFPVFVKPANLGSSVGISKCNNEEELKSGIEEAFQFDRKLVIEQGIEAREIE. Positions 293, 306, and 308 each coordinate Mg(2+).

This sequence belongs to the D-alanine--D-alanine ligase family. It depends on Mg(2+) as a cofactor. Mn(2+) serves as cofactor.

The protein resides in the cytoplasm. It carries out the reaction 2 D-alanine + ATP = D-alanyl-D-alanine + ADP + phosphate + H(+). The protein operates within cell wall biogenesis; peptidoglycan biosynthesis. In terms of biological role, cell wall formation. This chain is D-alanine--D-alanine ligase, found in Staphylococcus carnosus (strain TM300).